A 366-amino-acid chain; its full sequence is Pectinesterase A (366 aa).

An N-terminal signal peptide occupies residues 1–24 (MLKTISGTLALSLIIAASVHQAQA). Substrate-binding residues include T109 and Q153. Residue D178 is the Proton donor of the active site. Residues C192 and C212 are joined by a disulfide bond. D199 (nucleophile) is an active-site residue. Positions 219, 226, 230, 267, 269, and 272 each coordinate substrate.

Belongs to the pectinesterase family. In terms of assembly, monomer.

Its subcellular location is the secreted. The catalysed reaction is [(1-&gt;4)-alpha-D-galacturonosyl methyl ester](n) + n H2O = [(1-&gt;4)-alpha-D-galacturonosyl](n) + n methanol + n H(+). Its pathway is glycan metabolism; pectin degradation; 2-dehydro-3-deoxy-D-gluconate from pectin: step 1/5. Involved in maceration and soft-rotting of plant tissue. This is Pectinesterase A (pemA) from Dickeya chrysanthemi (Pectobacterium chrysanthemi).